We begin with the raw amino-acid sequence, 419 residues long: Tyrosine--tRNA ligase (419 aa).

L-tyrosine is bound at residue Tyr34. The 'HIGH' region signature appears at Pro39–His48. 2 residues coordinate L-tyrosine: Tyr169 and Gln173. The 'KMSKS' region signature appears at Lys229–Ser233. Lys232 contributes to the ATP binding site. The S4 RNA-binding domain occupies Leu352–Lys419.

It belongs to the class-I aminoacyl-tRNA synthetase family. TyrS type 1 subfamily. Homodimer.

It is found in the cytoplasm. It catalyses the reaction tRNA(Tyr) + L-tyrosine + ATP = L-tyrosyl-tRNA(Tyr) + AMP + diphosphate + H(+). Catalyzes the attachment of tyrosine to tRNA(Tyr) in a two-step reaction: tyrosine is first activated by ATP to form Tyr-AMP and then transferred to the acceptor end of tRNA(Tyr). This chain is Tyrosine--tRNA ligase, found in Streptococcus agalactiae serotype V (strain ATCC BAA-611 / 2603 V/R).